The following is a 161-amino-acid chain: Bacterioferritin (161 aa).

A Ferritin-like diiron domain is found at 1–145 (MKGEPKVIER…TQLDLLAKIG (145 aa)). 2 residues coordinate Fe cation: Glu-18 and Glu-51. Residue Met-52 participates in heme b binding. His-54, Glu-94, Glu-127, and His-130 together coordinate Fe cation.

The protein belongs to the bacterioferritin family. In terms of assembly, homooligomer of 24 subunits, arranged as 12 dimers, that are packed together to form an approximately spherical molecule with a central cavity, in which large amounts of iron can be deposited. Heme b is required as a cofactor.

It carries out the reaction 4 Fe(2+) + O2 + 4 H(+) = 4 Fe(3+) + 2 H2O. The catalysed reaction is Fe(2+)(in) = Fe(2+)(out). Its function is as follows. Iron-storage protein, whose ferroxidase center binds Fe(2+), oxidizes it using dioxygen to Fe(3+), and participates in the subsequent Fe(3+) oxide mineral core formation within the central cavity of the BFR protein shell. The polypeptide is Bacterioferritin (bfr) (Brucella melitensis biotype 1 (strain ATCC 23456 / CCUG 17765 / NCTC 10094 / 16M)).